We begin with the raw amino-acid sequence, 347 residues long: sn-glycerol-3-phosphate import ATP-binding protein UgpC 1 (347 aa).

One can recognise an ABC transporter domain in the interval 4 to 234; it reads IELIDLKKNY…PETVFVAGFI (231 aa). Residue 36 to 43 coordinates ATP; sequence GPSGCGKS.

It belongs to the ABC transporter superfamily. sn-glycerol-3-phosphate importer (TC 3.A.1.1.3) family. In terms of assembly, the complex is composed of two ATP-binding proteins (UgpC), two transmembrane proteins (UgpA and UgpE) and a solute-binding protein (UgpB).

Its subcellular location is the cell inner membrane. It carries out the reaction sn-glycerol 3-phosphate(out) + ATP + H2O = sn-glycerol 3-phosphate(in) + ADP + phosphate + H(+). Functionally, part of the ABC transporter complex UgpBAEC involved in sn-glycerol-3-phosphate (G3P) import. Responsible for energy coupling to the transport system. In Rhizobium etli (strain ATCC 51251 / DSM 11541 / JCM 21823 / NBRC 15573 / CFN 42), this protein is sn-glycerol-3-phosphate import ATP-binding protein UgpC 1.